A 561-amino-acid chain; its full sequence is (+)-alpha-pinene synthase TPS2FN (561 aa).

5 residues coordinate (2E)-geranyl diphosphate: arginine 276, aspartate 313, aspartate 317, arginine 455, and aspartate 458. Residues aspartate 313 and aspartate 317 each coordinate Mg(2+). The DDXXD motif signature appears at 313 to 317; it reads DDIYD. 3 residues coordinate Mg(2+): aspartate 458, threonine 462, and glutamate 466.

Belongs to the terpene synthase family. Tpsb subfamily. It depends on Mg(2+) as a cofactor. Requires Mn(2+) as cofactor. As to expression, expressed in glandular trichomes two to four weeks after flowering onset.

It carries out the reaction (2E)-geranyl diphosphate = (1R,5R)-alpha-pinene + diphosphate. The enzyme catalyses (2E)-geranyl diphosphate = (4S)-limonene + diphosphate. The catalysed reaction is (2E)-geranyl diphosphate = sabinene + diphosphate. It catalyses the reaction (2E)-geranyl diphosphate = beta-phellandrene + diphosphate. It carries out the reaction (2E)-geranyl diphosphate = camphene + diphosphate. The enzyme catalyses (2E)-geranyl diphosphate = isoterpinolene + diphosphate. It functions in the pathway secondary metabolite biosynthesis; terpenoid biosynthesis. It participates in terpene metabolism; (-)-alpha-pinene biosynthesis; (-)-alpha-pinene from geranyl diphosphate: step 1/1. In terms of biological role, involved in monoterpene (C10) olefins biosynthesis, constituants of cannabinoids and terpenoids-rich resins. Catalyzes mainly the conversion of (2E)-geranyl diphosphate to (+)-alpha-pinene, and also produces minor products such as camphene, sabinene, beta-phellandrene, (-)-limonene and isoterpinolene. The polypeptide is (+)-alpha-pinene synthase TPS2FN (Cannabis sativa (Hemp)).